The following is a 111-amino-acid chain: Class I hydrophobin 10 (111 aa).

A signal peptide spans 1–17 (MLFNTFVVTALASLAAA). 4 disulfide bridges follow: Cys30–Cys90, Cys37–Cys84, Cys38–Cys71, and Cys91–Cys104.

Belongs to the fungal hydrophobin family. Self-assembles to form functional amyloid fibrils called rodlets. Self-assembly into fibrillar rodlets occurs spontaneously at hydrophobic:hydrophilic interfaces and the rodlets further associate laterally to form amphipathic monolayers.

The protein localises to the secreted. The protein resides in the cell wall. In terms of biological role, aerial growth, conidiation, and dispersal of filamentous fungi in the environment rely upon a capability of their secreting small amphipathic proteins called hydrophobins (HPBs) with low sequence identity. Class I can self-assemble into an outermost layer of rodlet bundles on aerial cell surfaces, conferring cellular hydrophobicity that supports fungal growth, development and dispersal; whereas Class II form highly ordered films at water-air interfaces through intermolecular interactions but contribute nothing to the rodlet structure. The chain is Class I hydrophobin 10 from Pleurotus ostreatus (strain PC15) (Oyster mushroom).